Here is a 270-residue protein sequence, read N- to C-terminus: Nuclear receptor-interacting protein 2 (270 aa).

A compositionally biased stretch (basic and acidic residues) spans 1–27 (MSTGQEARRDEGDSRKEQEASLRDRAH). The disordered stretch occupies residues 1-33 (MSTGQEARRDEGDSRKEQEASLRDRAHLSQQRQ). The interaction with NR1F2 stretch occupies residues 61–99 (KDLQPHSVIQRRLVEGNQRRLQGESPLLQALIRGHDSSR). Positions 192–196 (LQTLL) match the LXXLL motif motif.

Interacts with NR1F2, RARA and THRB in a ligand-dependent manner. As to expression, expression is restricted to the central nervous system (neurons in the dentate gyrus of the hippocampus, the amygdala, thalamic and hypothalamic regions).

The protein resides in the nucleus. Its function is as follows. Down-regulates transcriptional activation by nuclear receptors, such as NR1F2. The protein is Nuclear receptor-interacting protein 2 (Nrip2) of Mus musculus (Mouse).